We begin with the raw amino-acid sequence, 102 residues long: MLNDAKQTRANPGTSRPHSNGGGSSHGNELPRRTEQRAQGPRQPARLPKQGKTNGKSDGNITAGETQRGGIPRGKGPRGGKTNTRRTPPKAGAQPQPSNNRK.

The segment at 1-102 (MLNDAKQTRA…AQPQPSNNRK (102 aa)) is disordered. 2 stretches are compositionally biased toward polar residues: residues 8–17 (TRANPGTSRP) and 51–65 (GKTN…TAGE). Residues 75 to 88 (KGPRGGKTNTRRTP) show a composition bias toward basic residues.

Not known. Encoded on a subgenomic RNA (RNA3) synthesized during replication and which is co-terminal with RNA1. This Black beetle virus (BBV) protein is Protein B1 (B1).